The primary structure comprises 89 residues: Small ribosomal subunit protein uS15 (89 aa).

This sequence belongs to the universal ribosomal protein uS15 family. Part of the 30S ribosomal subunit. Forms a bridge to the 50S subunit in the 70S ribosome, contacting the 23S rRNA.

Its function is as follows. One of the primary rRNA binding proteins, it binds directly to 16S rRNA where it helps nucleate assembly of the platform of the 30S subunit by binding and bridging several RNA helices of the 16S rRNA. In terms of biological role, forms an intersubunit bridge (bridge B4) with the 23S rRNA of the 50S subunit in the ribosome. In Mycobacteroides abscessus (strain ATCC 19977 / DSM 44196 / CCUG 20993 / CIP 104536 / JCM 13569 / NCTC 13031 / TMC 1543 / L948) (Mycobacterium abscessus), this protein is Small ribosomal subunit protein uS15.